The sequence spans 295 residues: Cell shape-determining protein MreC (295 aa).

A signal peptide spans 1–34 (MPQFFLNKRLIILLISIIVLVALVGFSLRDRENA). Residues 66-112 (VVDLKNTYTENQHLKERLEELAQLESEVADLKKENKDLKESLDITDS) are a coiled coil. Positions 276 to 295 (SAEAGTTDDDTTSSDTTGGQ) are disordered.

The protein belongs to the MreC family. As to quaternary structure, homooligomer of 24 subunits, arranged as 12 dimers.

In terms of biological role, involved in formation and maintenance of cell shape. In Listeria monocytogenes serovar 1/2a (strain ATCC BAA-679 / EGD-e), this protein is Cell shape-determining protein MreC.